The following is a 315-amino-acid chain: tRNA-dihydrouridine(16) synthase (315 aa).

FMN-binding positions include 7–9 (PME) and Gln-68. Residue Cys-98 is the Proton donor of the active site. Residues Lys-139, 200–202 (NGE), and 224–225 (GR) each bind FMN.

Belongs to the Dus family. DusC subfamily. It depends on FMN as a cofactor.

It catalyses the reaction 5,6-dihydrouridine(16) in tRNA + NADP(+) = uridine(16) in tRNA + NADPH + H(+). It carries out the reaction 5,6-dihydrouridine(16) in tRNA + NAD(+) = uridine(16) in tRNA + NADH + H(+). Catalyzes the synthesis of 5,6-dihydrouridine (D), a modified base found in the D-loop of most tRNAs, via the reduction of the C5-C6 double bond in target uridines. DusC specifically modifies U16 in tRNAs. This is tRNA-dihydrouridine(16) synthase from Escherichia coli (strain K12).